The chain runs to 106 residues: Iron-sulfur cluster assembly protein CyaY (106 aa).

This sequence belongs to the frataxin family.

In terms of biological role, involved in iron-sulfur (Fe-S) cluster assembly. May act as a regulator of Fe-S biogenesis. The polypeptide is Iron-sulfur cluster assembly protein CyaY (Escherichia coli O9:H4 (strain HS)).